A 131-amino-acid polypeptide reads, in one-letter code: Insulin-like 3 (131 aa).

The N-terminal stretch at 1-20 (MDPRLPAWALVLLGPALVFA) is a signal peptide. Disulfide bonds link C34-C116, C46-C129, and C115-C120. Positions 58-104 (PATGGDRELLQWLERRHLLHGLVADSNLTLGPGLQPLPQTSHHHRHH) are cleaved as a propeptide — c peptide like.

The protein belongs to the insulin family. In terms of assembly, heterodimer of a B chain and an A chain linked by two disulfide bonds. As to expression, expressed in prenatal and postnatal Leydig cells. Found as well in the corpus luteum, trophoblast, fetal membranes and breast.

It localises to the secreted. Functionally, seems to play a role in testicular function. May be a trophic hormone with a role in testicular descent in fetal life. Is a ligand for LGR8 receptor. The protein is Insulin-like 3 (INSL3) of Homo sapiens (Human).